Reading from the N-terminus, the 391-residue chain is Ferrochelatase (391 aa).

Residues histidine 196 and glutamate 281 each contribute to the Fe cation site.

This sequence belongs to the ferrochelatase family.

It is found in the cytoplasm. The enzyme catalyses heme b + 2 H(+) = protoporphyrin IX + Fe(2+). Its pathway is porphyrin-containing compound metabolism; protoheme biosynthesis; protoheme from protoporphyrin-IX: step 1/1. Its function is as follows. Catalyzes the ferrous insertion into protoporphyrin IX. This chain is Ferrochelatase, found in Prochlorococcus marinus (strain MIT 9515).